The chain runs to 1412 residues: MRQFKEIPFYNQIVDKGTIKQLIGRLVAHFGSTYTSHILDKLKELGFEYGTKTGISLGIDDLLITPSKKWLIQDAEQQAQASDSHYNSGNLHAVEKLRQLIETWHTTSEYLKQEMNPNFRITDPFNPVHMMAFSGARGTTSQVHQLVGMRGLMSDPHGQIIDLPIQSNFREGLSLAEYIISCYGARKGVVDTAIRTSDSGYLTRRLVDVAQHIVVRKTDCKTHKCISIQPFLEEWKMNIHLYVQQKLIGRILADYVLKDNRCIASRNQDISFDLAIRLLSFKFQSIWVRSPLTCESTRWICQMCYGWSIGYRNLIEVGEAVGIIAAQSIGEPGTQLTLRTFHTGGVFTGDIAQQIRSPLNGIIQLNNSKIRSIRNRYGQPAFVCLDNIHIKVKGKDTYQSIIPTESLLFVKNNQKVQAKQVIAEIRSTIRQSKEEVNKNINSELAGEVFWSNKYYFKEQNLHDLQKNNFFVKNNHNFRNCPTSDSQNENDSNRSNHFLTINSIKYSQEKTNWPISNTGHIWILSGQVYKFHNIQSIFYKQQDKVRIKNILAQKELLVNNGGRYHNFHSQRLSYFQENLMNNSYTHSKKKTKSLSSNFVNNAICGLTILKEKKGKFSFLKNSSFCKKTRTNLQFILEVKNYSRIKHNDLLATLHNPAHRTSTAGMVKYGFLLINSQLDKNLKSYNKNSRKKKISLYQNNQIQPGQSLFWIPEEIHEIYKPFSFLHVKNGEIIQKGTYISEDIQCGTSGLVEINKRNRNHYEISIQPGSLYFLKDKQIALQKDQILIAPGEKIDNTNISDEWLYLKYLKTDQGVSVLFARPAKEYKIDLINHLEHASSLETLYMKKCFDVRISHYTPYEDGQKIRNNAGAQLISASLVFKLNNQNLAHKAEISWTRIKFQRKISYYLQINLRDKILPYSYSLSELKKLKFNSHFSNKNKQINNIDEVILGDTIFHTPLLTKNYGCIRTFSRRRQDNKTSFVLLSSSDQLELPLPIIFFAFISYKRFFNKKLGLIGNLYTKKTKLRNSNQNLFLNLFFISWYIIDEYSCNFLFWGAFSQLIKDARNKYSHNCFPIIIKKAFFSLGKFLSKIEMKILGNLETELGQVISLCNKKIILRIGKPYLATRGAIVHPRNGETIREGDTLMTLIYERLKAGDIIQGLPKIEQLLEARRENVVELIVNRYFLDCTNLLTEELGMLLGSLWGFQFSAWASMERSKLDLVFEIQQVYRSQGVYICDKHIEIIVRQMTSKIIILGDGMTDGFLPGELVEIPRARKTNRAMKSIMFYKPILVGITRASLNTRSFISEASFQETTRVLTKAAIKGRTDWLKGLKENVILGRLIPAGTGSEEIILQRLMNLQKIEKLRKGKSKKYTTSKLDSLLFSKCKSAFLKRHPLNPYCRETFHFILKQQITNSF.

Zn(2+) is bound by residues cysteine 220, cysteine 294, cysteine 301, and cysteine 304.

The protein belongs to the RNA polymerase beta' chain family. RpoC2 subfamily. As to quaternary structure, in plastids the minimal PEP RNA polymerase catalytic core is composed of four subunits: alpha, beta, beta', and beta''. When a (nuclear-encoded) sigma factor is associated with the core the holoenzyme is formed, which can initiate transcription. Zn(2+) is required as a cofactor.

It localises to the plastid. The protein localises to the chloroplast. It carries out the reaction RNA(n) + a ribonucleoside 5'-triphosphate = RNA(n+1) + diphosphate. Its function is as follows. DNA-dependent RNA polymerase catalyzes the transcription of DNA into RNA using the four ribonucleoside triphosphates as substrates. The chain is DNA-directed RNA polymerase subunit beta'' from Chara vulgaris (Common stonewort).